Here is a 209-residue protein sequence, read N- to C-terminus: Ribosome maturation factor RimP (209 aa).

Belongs to the RimP family.

Its subcellular location is the cytoplasm. Its function is as follows. Required for maturation of 30S ribosomal subunits. This chain is Ribosome maturation factor RimP, found in Bartonella bacilliformis (strain ATCC 35685 / KC583 / Herrer 020/F12,63).